The following is a 347-amino-acid chain: Anthranilate phosphoribosyltransferase (347 aa).

5-phospho-alpha-D-ribose 1-diphosphate contacts are provided by residues Gly88, 91–92, Thr96, 98–101, 116–124, and Ser128; these read GD, NIST, and KHGNRSVSS. Gly88 provides a ligand contact to anthranilate. Ser100 is a Mg(2+) binding site. Anthranilate is bound at residue Asn119. Position 174 (Arg174) interacts with anthranilate. Mg(2+) is bound by residues Asp232 and Glu233.

Belongs to the anthranilate phosphoribosyltransferase family. In terms of assembly, homodimer. Mg(2+) is required as a cofactor.

The catalysed reaction is N-(5-phospho-beta-D-ribosyl)anthranilate + diphosphate = 5-phospho-alpha-D-ribose 1-diphosphate + anthranilate. The protein operates within amino-acid biosynthesis; L-tryptophan biosynthesis; L-tryptophan from chorismate: step 2/5. In terms of biological role, catalyzes the transfer of the phosphoribosyl group of 5-phosphorylribose-1-pyrophosphate (PRPP) to anthranilate to yield N-(5'-phosphoribosyl)-anthranilate (PRA). This is Anthranilate phosphoribosyltransferase from Shewanella oneidensis (strain ATCC 700550 / JCM 31522 / CIP 106686 / LMG 19005 / NCIMB 14063 / MR-1).